A 146-amino-acid chain; its full sequence is Hemoglobin subunit beta (146 aa).

Valine 1 carries the N-acetylvaline modification. The 145-residue stretch at 2-146 (HLTGEEKAAV…VANALAHKYH (145 aa)) folds into the Globin domain. Threonine 12 carries the post-translational modification Phosphothreonine. Phosphoserine is present on serine 44. Lysine 59 carries the N6-acetyllysine modification. Histidine 63 contacts heme b. Lysine 82 carries the post-translational modification N6-acetyllysine. A heme b-binding site is contributed by histidine 92. Cysteine 93 carries the post-translational modification S-nitrosocysteine. Lysine 144 bears the N6-acetyllysine mark.

This sequence belongs to the globin family. As to quaternary structure, heterotetramer of two alpha chains and two beta chains. In terms of tissue distribution, red blood cells.

Involved in oxygen transport from the lung to the various peripheral tissues. The polypeptide is Hemoglobin subunit beta (HBB) (Ailurus fulgens (Himalayan red panda)).